A 1066-amino-acid chain; its full sequence is E3 ubiquitin-protein ligase PDZRN3 (1066 aa).

The RING-type; degenerate zinc-finger motif lies at 18 to 56 (CALCHKVLEDPLTTPCGHVFCAGCVLPWVVQEGSCPARC). The TRAF-type zinc-finger motif lies at 100-158 (EHLERCDFAPARCRHAGCGQVLLRRDVEAHMRDACDARPVGRCQEGCGLPLTHGEQRAG). PDZ domains lie at 249–339 (TLVL…LRRT) and 419–503 (EVDL…IARP). The residue at position 427 (S427) is a Phosphoserine. The tract at residues 545–603 (QKKHDEDGGTTDTATILSNQHEKDSGVGRTDESTRNDESSEQENNGDDATASSNPLAGQ) is disordered. Over residues 554–563 (TTDTATILSN) the composition is skewed to polar residues. The span at 564 to 582 (QHEKDSGVGRTDESTRNDE) shows a compositional bias: basic and acidic residues. The segment covering 594-603 (TASSNPLAGQ) has biased composition (polar residues). A coiled-coil region spans residues 679-704 (ESVDKELELLNEELRSIELECLSIVR). The segment covering 744 to 754 (TELPEKSDKDS) has biased composition (basic and acidic residues). Disordered stretches follow at residues 744–778 (TELP…PDNS) and 808–863 (LLSI…LPSY). Polar residues-rich tracts occupy residues 755–769 (SSAY…STPL) and 845–855 (GSRSPTPSQKL). Residues 975 to 1025 (KEERKQHLVKAKEQRRRREFMMQSRLDCLKEQQAADDRKEMNILELSHKKM) are a coiled coil.

As to quaternary structure, interacts with NLGN1 and EFNB2. Interacts with UBE2D2 and with MUSK via the first PDZ domain. In terms of processing, auto-ubiquitinated. As to expression, widely expressed, including in the heart, skeletal muscle and liver and, at lower levels, in the brain, colon, small intestine, placenta and lung. Down-regulated in ovarian serous papillary tumors.

The protein localises to the synapse. It localises to the cytoplasm. The catalysed reaction is S-ubiquitinyl-[E2 ubiquitin-conjugating enzyme]-L-cysteine + [acceptor protein]-L-lysine = [E2 ubiquitin-conjugating enzyme]-L-cysteine + N(6)-ubiquitinyl-[acceptor protein]-L-lysine.. Its pathway is protein modification; protein ubiquitination. Its function is as follows. E3 ubiquitin-protein ligase. Plays an important role in regulating the surface level of MUSK on myotubes. Mediates the ubiquitination of MUSK, promoting its endocytosis and lysosomal degradation. Might contribute to terminal myogenic differentiation. This Homo sapiens (Human) protein is E3 ubiquitin-protein ligase PDZRN3 (PDZRN3).